A 312-amino-acid polypeptide reads, in one-letter code: Protease HtpX homolog (312 aa).

2 helical membrane passes run Thr6 to Gly26 and Gly28 to Ala48. Position 130 (His130) interacts with Zn(2+). Glu131 is an active-site residue. His134 is a binding site for Zn(2+). 2 helical membrane-spanning segments follow: residues Ile145–Gly165 and Pro173–Val193. Position 202 (Glu202) interacts with Zn(2+). Residues Pro287–Gly297 are compositionally biased toward low complexity. The interval Pro287 to Gly312 is disordered. Residues Pro298–Gly312 are compositionally biased toward gly residues.

The protein belongs to the peptidase M48B family. Requires Zn(2+) as cofactor.

It localises to the cell inner membrane. This chain is Protease HtpX homolog, found in Azorhizobium caulinodans (strain ATCC 43989 / DSM 5975 / JCM 20966 / LMG 6465 / NBRC 14845 / NCIMB 13405 / ORS 571).